The chain runs to 25 residues: Flagellar filament core protein flaB3 (25 aa).

It belongs to the bacterial flagellin family. The flagellum consists of an outer layer composed of two sheath proteins, flaA1 (44 kDa) and flaA2 (35 kDa) around a core that contains three proteins flaB1 (37 kDa), flaB2 (34 kDa) and flaB3 (32 kDa).

The protein localises to the periplasmic flagellum. The protein resides in the periplasm. In terms of biological role, component of the core of the flagella. This chain is Flagellar filament core protein flaB3 (flaB3), found in Brachyspira hyodysenteriae (Treponema hyodysenteriae).